A 1433-amino-acid chain; its full sequence is CAP-Gly domain-containing linker protein 1 (1433 aa).

The disordered stretch occupies residues 1-51 (MSMLKPSGLKAPSKTIKHGSTLLKAPASVATAPAEKAPSSEKSSSTTTADA). The segment covering 32-49 (APAEKAPSSEKSSSTTTA) has biased composition (low complexity). Positions 79-121 (GETQFAPGQWAGIVLDEPIGKNDGSVAGVRYFQCEPLRGIFTR) constitute a CAP-Gly 1 domain. The tract at residues 133-208 (DEANGTQTAH…VSNLSEAGSL (76 aa)) is disordered. Low complexity predominate over residues 140–168 (TAHASRATSPTSTSTASAVSASPAALLPS). A compositionally biased stretch (polar residues) spans 184 to 204 (TPSQFSNLSKTASGSVSNLSE). The 43-residue stretch at 235 to 277 (GETDFAKGEWCGVELDEPLGKNDGAVAGTRYFQCQPRYGLFAP) folds into the CAP-Gly 2 domain. The segment covering 319–333 (SLSSVASSVSSKPSR) has biased composition (low complexity). Positions 319–338 (SLSSVASSVSSKPSRTGLLT) are disordered. Positions 351–1353 (TTALQEALKE…CEAALNGNEE (1003 aa)) form a coiled coil. The segment at 1412 to 1429 (PYCDTCEMFGHWTADCND) adopts a CCHC-type zinc-finger fold.

Its subcellular location is the cytoplasm. The protein localises to the cytoskeleton. It localises to the cytoplasmic vesicle membrane. It is found in the cell projection. The protein resides in the ruffle. Its function is as follows. Binds to the plus end of microtubules and regulates the dynamics of the microtubule cytoskeleton. Promotes microtubule growth and microtubule bundling. Links cytoplasmic vesicles to microtubules and thereby plays an important role in intracellular vesicle trafficking. Plays a role macropinocytosis and endosome trafficking. This is CAP-Gly domain-containing linker protein 1 (CLIP1) from Gallus gallus (Chicken).